Reading from the N-terminus, the 617-residue chain is uncharacterized protein (617 aa).

Residues alanine 103 to alanine 123 form a helical membrane-spanning segment. Residues phenylalanine 200–leucine 609 enclose the Protein kinase domain. Residues valine 206–valine 214 and lysine 302 each bind ATP. The Proton acceptor role is filled by aspartate 436.

The protein belongs to the protein kinase superfamily. ADCK protein kinase family.

The protein localises to the mitochondrion. Its subcellular location is the membrane. Its function is as follows. The function of this protein is not yet clear. It is not known if it has protein kinase activity and what type of substrate it would phosphorylate (Ser, Thr or Tyr). Involved in the mitochondrial import of CoQ precursors, plays a role in muscle mitochondrial function and fatty acid beta-oxidation. This is an uncharacterized protein from Mus musculus (Mouse).